A 259-amino-acid chain; its full sequence is GTP cyclohydrolase FolE2 (259 aa).

It belongs to the GTP cyclohydrolase IV family.

It carries out the reaction GTP + H2O = 7,8-dihydroneopterin 3'-triphosphate + formate + H(+). Its pathway is cofactor biosynthesis; 7,8-dihydroneopterin triphosphate biosynthesis; 7,8-dihydroneopterin triphosphate from GTP: step 1/1. Converts GTP to 7,8-dihydroneopterin triphosphate. This Thermotoga petrophila (strain ATCC BAA-488 / DSM 13995 / JCM 10881 / RKU-1) protein is GTP cyclohydrolase FolE2.